We begin with the raw amino-acid sequence, 274 residues long: uncharacterized protein (274 aa).

Residues 253 to 274 (QTGDVRTTEGTALTDDTTKRNI) are disordered.

This is an uncharacterized protein from Deinococcus radiodurans (strain ATCC 13939 / DSM 20539 / JCM 16871 / CCUG 27074 / LMG 4051 / NBRC 15346 / NCIMB 9279 / VKM B-1422 / R1).